The primary structure comprises 332 residues: tRNA dimethylallyltransferase (332 aa).

17–24 (GPTCSGKS) lines the ATP pocket. 19-24 (TCSGKS) serves as a coordination point for substrate. Interaction with substrate tRNA stretches follow at residues 42–45 (DSMQ) and 166–170 (QRISR).

This sequence belongs to the IPP transferase family. As to quaternary structure, monomer. It depends on Mg(2+) as a cofactor.

It carries out the reaction adenosine(37) in tRNA + dimethylallyl diphosphate = N(6)-dimethylallyladenosine(37) in tRNA + diphosphate. Catalyzes the transfer of a dimethylallyl group onto the adenine at position 37 in tRNAs that read codons beginning with uridine, leading to the formation of N6-(dimethylallyl)adenosine (i(6)A). The protein is tRNA dimethylallyltransferase of Gluconobacter oxydans (strain 621H) (Gluconobacter suboxydans).